Consider the following 381-residue polypeptide: CD209 antigen (381 aa).

Topologically, residues 1 to 37 are cytoplasmic; that stretch reads MSDSKEPRLQQLGLLEEEQLGGVGFRQTRGYKSLAGC. Short sequence motifs (endocytosis signal) lie at residues 14–15, 16–18, and 31–34; these read LL, EEE, and YKSL. Residues 38–58 form a helical; Signal-anchor for type II membrane protein membrane-spanning segment; that stretch reads LGHGPLVLQLLSFTLLAGLLV. Residues 59–381 are Extracellular-facing; it reads QVSKVPSSLS…TPTTPNPPPE (323 aa). Asparagine 80 is a glycosylation site (N-linked (GlcNAc...) asparagine). Repeat copies occupy residues 96-118, 119-141, 142-164, 165-187, 188-210, and 211-234. A 6 X approximate tandem repeats region spans residues 96–303; it reads KQQEIYQELT…GLSDLNHEGT (208 aa). 3 disulfides stabilise this stretch: cysteine 233/cysteine 244, cysteine 261/cysteine 354, and cysteine 333/cysteine 346. The region spanning 240 to 355 is the C-type lectin domain; that stretch reads FQGNCYFMSN…CNLAKFWICK (116 aa). The Ca(2+) site is built by glutamate 324, asparagine 326, isoleucine 328, glutamate 331, asparagine 342, and aspartate 343. The segment at 359 to 381 is disordered; sequence ASCSGDEERLLSPTPTTPNPPPE.

In terms of assembly, homotetramer. Interacts with C1QBP; the interaction is indicative for a C1q:C1QBP:CD209 signaling complex. Interacts with ICAM2 and ICAM3 by binding to mannose-like carbohydrates. Interacts (via C-type lectin domain) with CEACAM1 (via Lewis X moieties); this interaction is regulated by the glycosylation pattern of CEACAM1 on cell types and regulates contact between dendritic cells and neutrophils. As to expression, expressed in lymph nodes.

The protein localises to the membrane. In terms of biological role, pathogen-recognition receptor expressed on the surface of immature dendritic cells (DCs) and involved in initiation of primary immune response. Thought to mediate the endocytosis of pathogens which are subsequently degraded in lysosomal compartments. The receptor returns to the cell membrane surface and the pathogen-derived antigens are presented to resting T-cells via MHC class II proteins to initiate the adaptive immune response. Probably recognizes in a calcium-dependent manner high mannose N-linked oligosaccharides in a variety of pathogen antigens. Functionally, on DCs it is a high affinity receptor for ICAM2 and ICAM3 by binding to mannose-like carbohydrates. May act as a DC rolling receptor that mediates transendothelial migration of DC presursors from blood to tissues by binding endothelial ICAM2. Seems to regulate DC-induced T-cell proliferation by binding to ICAM3 on T-cells in the immunological synapse formed between DC and T-cells. In Chlorocebus aethiops (Green monkey), this protein is CD209 antigen (CD209).